A 171-amino-acid chain; its full sequence is ATP synthase subunit b (171 aa).

Residues 10–30 (GLYYGDSIFYAVCFLLLMWII) traverse the membrane as a helical segment.

This sequence belongs to the ATPase B chain family. As to quaternary structure, F-type ATPases have 2 components, F(1) - the catalytic core - and F(0) - the membrane proton channel. F(1) has five subunits: alpha(3), beta(3), gamma(1), delta(1), epsilon(1). F(0) has three main subunits: a(1), b(2) and c(10-14). The alpha and beta chains form an alternating ring which encloses part of the gamma chain. F(1) is attached to F(0) by a central stalk formed by the gamma and epsilon chains, while a peripheral stalk is formed by the delta and b chains.

The protein localises to the cell membrane. In terms of biological role, f(1)F(0) ATP synthase produces ATP from ADP in the presence of a proton or sodium gradient. F-type ATPases consist of two structural domains, F(1) containing the extramembraneous catalytic core and F(0) containing the membrane proton channel, linked together by a central stalk and a peripheral stalk. During catalysis, ATP synthesis in the catalytic domain of F(1) is coupled via a rotary mechanism of the central stalk subunits to proton translocation. Component of the F(0) channel, it forms part of the peripheral stalk, linking F(1) to F(0). The protein is ATP synthase subunit b of Levilactobacillus brevis (strain ATCC 367 / BCRC 12310 / CIP 105137 / JCM 1170 / LMG 11437 / NCIMB 947 / NCTC 947) (Lactobacillus brevis).